Consider the following 161-residue polypeptide: Lipoprotein signal peptidase (161 aa).

A run of 3 helical transmembrane segments spans residues 9-29 (ISLLMTFIVLVFDQVSKWLIT), 63-83 (KMLFFYIITIIILIVLVIFYI), and 88-108 (FNLFMQVAISLLFAGALGNFI). Catalysis depends on residues Asp118 and Asp136. Residues 131–151 (IFNIADSSLTIGVIFVIITLI) form a helical membrane-spanning segment.

It belongs to the peptidase A8 family.

The protein localises to the cell membrane. It carries out the reaction Release of signal peptides from bacterial membrane prolipoproteins. Hydrolyzes -Xaa-Yaa-Zaa-|-(S,diacylglyceryl)Cys-, in which Xaa is hydrophobic (preferably Leu), and Yaa (Ala or Ser) and Zaa (Gly or Ala) have small, neutral side chains.. It participates in protein modification; lipoprotein biosynthesis (signal peptide cleavage). In terms of biological role, this protein specifically catalyzes the removal of signal peptides from prolipoproteins. This is Lipoprotein signal peptidase from Staphylococcus epidermidis (strain ATCC 35984 / DSM 28319 / BCRC 17069 / CCUG 31568 / BM 3577 / RP62A).